A 387-amino-acid chain; its full sequence is tRNA N6-adenosine threonylcarbamoyltransferase (387 aa).

Residues His112 and His116 each contribute to the Fe cation site. Substrate-binding positions include 134–138 (LASGG), Asp167, Gly180, and Asn325. Asp353 contributes to the Fe cation binding site.

This sequence belongs to the KAE1 / TsaD family. Requires Fe(2+) as cofactor.

The protein resides in the cytoplasm. It carries out the reaction L-threonylcarbamoyladenylate + adenosine(37) in tRNA = N(6)-L-threonylcarbamoyladenosine(37) in tRNA + AMP + H(+). Functionally, required for the formation of a threonylcarbamoyl group on adenosine at position 37 (t(6)A37) in tRNAs that read codons beginning with adenine. Is involved in the transfer of the threonylcarbamoyl moiety of threonylcarbamoyl-AMP (TC-AMP) to the N6 group of A37, together with TsaE and TsaB. TsaD likely plays a direct catalytic role in this reaction. The protein is tRNA N6-adenosine threonylcarbamoyltransferase of Rickettsia typhi (strain ATCC VR-144 / Wilmington).